Reading from the N-terminus, the 26-residue chain is Delta-conotoxin Am2766 (26 aa).

3 cysteine pairs are disulfide-bonded: Cys1-Cys16, Cys8-Cys20, and Cys15-Cys24. Residue Glu26 is modified to Glutamic acid 1-amide.

In terms of tissue distribution, expressed by the venom duct.

It is found in the secreted. Delta-conotoxins bind to site 6 of voltage-gated sodium channels (Nav) and inhibit the inactivation process. In Conus amadis (Amadis cone), this protein is Delta-conotoxin Am2766.